Consider the following 484-residue polypeptide: Pyruvate kinase (484 aa).

Arginine 33 lines the substrate pocket. The K(+) site is built by asparagine 35, serine 37, aspartate 67, and threonine 68. An ATP-binding site is contributed by 35–38 (NFSH). 2 residues coordinate ATP: arginine 74 and lysine 155. Glutamate 221 lines the Mg(2+) pocket. Glycine 244, aspartate 245, and threonine 277 together coordinate substrate. Residue aspartate 245 coordinates Mg(2+).

This sequence belongs to the pyruvate kinase family. In terms of assembly, homotetramer. It depends on Mg(2+) as a cofactor. Requires K(+) as cofactor.

The catalysed reaction is pyruvate + ATP = phosphoenolpyruvate + ADP + H(+). Its pathway is carbohydrate degradation; glycolysis; pyruvate from D-glyceraldehyde 3-phosphate: step 5/5. This chain is Pyruvate kinase (pyk), found in Chlamydia pneumoniae (Chlamydophila pneumoniae).